Here is a 212-residue protein sequence, read N- to C-terminus: Outer-membrane lipoprotein carrier protein (212 aa).

A signal peptide spans 1–25; the sequence is MRKRILVSACAALAVFAAHMPTALA.

This sequence belongs to the LolA family. In terms of assembly, monomer.

It is found in the periplasm. Functionally, participates in the translocation of lipoproteins from the inner membrane to the outer membrane. Only forms a complex with a lipoprotein if the residue after the N-terminal Cys is not an aspartate (The Asp acts as a targeting signal to indicate that the lipoprotein should stay in the inner membrane). This chain is Outer-membrane lipoprotein carrier protein, found in Cupriavidus pinatubonensis (strain JMP 134 / LMG 1197) (Cupriavidus necator (strain JMP 134)).